The primary structure comprises 922 residues: DNA gyrase subunit A (922 aa).

Low complexity predominate over residues 1 to 14 (MTETPTDGGSTPPS). Residues 1–24 (MTETPTDGGSTPPSDGGGPGGRIE) are disordered. The Topo IIA-type catalytic domain maps to 49–518 (LPDVRDGLKP…ADGDLSMEDL (470 aa)). Tyr-137 serves as the catalytic O-(5'-phospho-DNA)-tyrosine intermediate. Positions 545–551 (QRRGGKG) match the GyrA-box motif. A disordered region spans residues 861 to 922 (EANGDDELDE…TEPDPGESDG (62 aa)). Composition is skewed to acidic residues over residues 863-890 (NGDDELDELDESALDEGGAEGGEVDESA) and 912-922 (DTEPDPGESDG).

This sequence belongs to the type II topoisomerase GyrA/ParC subunit family. Heterotetramer, composed of two GyrA and two GyrB chains. In the heterotetramer, GyrA contains the active site tyrosine that forms a transient covalent intermediate with DNA, while GyrB binds cofactors and catalyzes ATP hydrolysis.

The protein resides in the cytoplasm. It carries out the reaction ATP-dependent breakage, passage and rejoining of double-stranded DNA.. Functionally, a type II topoisomerase that negatively supercoils closed circular double-stranded (ds) DNA in an ATP-dependent manner to modulate DNA topology and maintain chromosomes in an underwound state. Negative supercoiling favors strand separation, and DNA replication, transcription, recombination and repair, all of which involve strand separation. Also able to catalyze the interconversion of other topological isomers of dsDNA rings, including catenanes and knotted rings. Type II topoisomerases break and join 2 DNA strands simultaneously in an ATP-dependent manner. The sequence is that of DNA gyrase subunit A from Nocardioides sp. (strain ATCC BAA-499 / JS614).